The primary structure comprises 114 residues: Pancreatic progenitor cell differentiation and proliferation factor (114 aa).

At S9 the chain carries Phosphoserine. Disordered regions lie at residues 22–47 (GSTS…PGLP) and 75–114 (AEHS…GPPS). The segment covering 23 to 33 (STSSNSSCSST) has biased composition (low complexity). A compositionally biased stretch (polar residues) spans 102-114 (GGQSSTASAGPPS).

The protein belongs to the PPDPF family.

In terms of biological role, probable regulator of exocrine pancreas development. This is Pancreatic progenitor cell differentiation and proliferation factor (PPDPF) from Homo sapiens (Human).